We begin with the raw amino-acid sequence, 350 residues long: Methylthioribose-1-phosphate isomerase (350 aa).

Aspartate 241 serves as the catalytic Proton donor.

This sequence belongs to the eIF-2B alpha/beta/delta subunits family. MtnA subfamily.

The protein localises to the cytoplasm. The protein resides in the nucleus. It catalyses the reaction 5-(methylsulfanyl)-alpha-D-ribose 1-phosphate = 5-(methylsulfanyl)-D-ribulose 1-phosphate. The protein operates within amino-acid biosynthesis; L-methionine biosynthesis via salvage pathway; L-methionine from S-methyl-5-thio-alpha-D-ribose 1-phosphate: step 1/6. Functionally, catalyzes the interconversion of methylthioribose-1-phosphate (MTR-1-P) into methylthioribulose-1-phosphate (MTRu-1-P). This Nematostella vectensis (Starlet sea anemone) protein is Methylthioribose-1-phosphate isomerase.